The primary structure comprises 264 residues: MAVGKNKRLTKGGKKGAKKKVVDPFSKKDWYDVKAPAMFNIRNIGKTLVTRTQGTKIASDGLKGRVFEVSLADLQNDEVAFRKFKLITEDVQGKNCLTNFHGMDLTRDKMCSMVKKWQTMIEAHVDVKTTDGYLLRLFCVGFTKKRNNQIRKTSYAQHQQVRQIRKKMMEIMTREVQTNDLKEVVNKLIPDSIGKDIEKACQSIYPLHDVYVRKVKMLKKPKFELGKLMELHGEGGGAGKPSGDEAGTKVERADGYEPPVQESV.

The disordered stretch occupies residues 232–264 (HGEGGGAGKPSGDEAGTKVERADGYEPPVQESV). Positions 242–255 (SGDEAGTKVERADG) are enriched in basic and acidic residues.

This sequence belongs to the eukaryotic ribosomal protein eS1 family. In terms of assembly, component of the small ribosomal subunit. Mature ribosomes consist of a small (40S) and a large (60S) subunit. The 40S subunit contains about 33 different proteins and 1 molecule of RNA (18S). The 60S subunit contains about 49 different proteins and 3 molecules of RNA (28S, 5.8S and 5S). Part of the small subunit (SSU) processome, composed of more than 70 proteins and the RNA chaperone small nucleolar RNA (snoRNA) U3.

It localises to the cytoplasm. It is found in the nucleus. Its subcellular location is the nucleolus. In terms of biological role, component of the small ribosomal subunit. The ribosome is a large ribonucleoprotein complex responsible for the synthesis of proteins in the cell. Part of the small subunit (SSU) processome, first precursor of the small eukaryotic ribosomal subunit. During the assembly of the SSU processome in the nucleolus, many ribosome biogenesis factors, an RNA chaperone and ribosomal proteins associate with the nascent pre-rRNA and work in concert to generate RNA folding, modifications, rearrangements and cleavage as well as targeted degradation of pre-ribosomal RNA by the RNA exosome. May play a role during erythropoiesis. The polypeptide is Small ribosomal subunit protein eS1 (Taeniopygia guttata (Zebra finch)).